The primary structure comprises 222 residues: Probable nicotinate-nucleotide adenylyltransferase (222 aa).

It belongs to the NadD family.

The enzyme catalyses nicotinate beta-D-ribonucleotide + ATP + H(+) = deamido-NAD(+) + diphosphate. The protein operates within cofactor biosynthesis; NAD(+) biosynthesis; deamido-NAD(+) from nicotinate D-ribonucleotide: step 1/1. Catalyzes the reversible adenylation of nicotinate mononucleotide (NaMN) to nicotinic acid adenine dinucleotide (NaAD). This is Probable nicotinate-nucleotide adenylyltransferase from Xylella fastidiosa (strain M23).